A 471-amino-acid polypeptide reads, in one-letter code: Glutamate--tRNA ligase (471 aa).

Residues 9 to 19 (PSPTGYLHVGG) carry the 'HIGH' region motif. Zn(2+) contacts are provided by C98, C100, C125, and H127. A 'KMSKS' region motif is present at residues 237–241 (KLSKR). An ATP-binding site is contributed by K240.

Belongs to the class-I aminoacyl-tRNA synthetase family. Glutamate--tRNA ligase type 1 subfamily. As to quaternary structure, monomer. The cofactor is Zn(2+).

It is found in the cytoplasm. It catalyses the reaction tRNA(Glu) + L-glutamate + ATP = L-glutamyl-tRNA(Glu) + AMP + diphosphate. Functionally, catalyzes the attachment of glutamate to tRNA(Glu) in a two-step reaction: glutamate is first activated by ATP to form Glu-AMP and then transferred to the acceptor end of tRNA(Glu). This chain is Glutamate--tRNA ligase, found in Shigella boydii serotype 4 (strain Sb227).